A 252-amino-acid polypeptide reads, in one-letter code: UPF0273 protein MK0039 (252 aa).

A KaiC domain is found at 4-248; the sequence is ERVSTGIPGM…VFVKERGEVR (245 aa). Position 31–38 (31–38) interacts with ATP; it reads GGPGTGKT.

This sequence belongs to the UPF0273 family.

The chain is UPF0273 protein MK0039 from Methanopyrus kandleri (strain AV19 / DSM 6324 / JCM 9639 / NBRC 100938).